The sequence spans 370 residues: Putative glutamate--cysteine ligase 2 (370 aa).

This sequence belongs to the glutamate--cysteine ligase type 2 family. YbdK subfamily.

The catalysed reaction is L-cysteine + L-glutamate + ATP = gamma-L-glutamyl-L-cysteine + ADP + phosphate + H(+). Its function is as follows. ATP-dependent carboxylate-amine ligase which exhibits weak glutamate--cysteine ligase activity. This Janthinobacterium sp. (strain Marseille) (Minibacterium massiliensis) protein is Putative glutamate--cysteine ligase 2.